We begin with the raw amino-acid sequence, 289 residues long: Homoserine kinase (289 aa).

79 to 89 lines the ATP pocket; sequence PLARGLGSSSS.

The protein belongs to the GHMP kinase family. Homoserine kinase subfamily.

The protein resides in the cytoplasm. It carries out the reaction L-homoserine + ATP = O-phospho-L-homoserine + ADP + H(+). Its pathway is amino-acid biosynthesis; L-threonine biosynthesis; L-threonine from L-aspartate: step 4/5. In terms of biological role, catalyzes the ATP-dependent phosphorylation of L-homoserine to L-homoserine phosphate. In Streptococcus pneumoniae (strain Taiwan19F-14), this protein is Homoserine kinase.